The sequence spans 308 residues: ADP-L-glycero-D-manno-heptose-6-epimerase (308 aa).

NADP(+) contacts are provided by residues 10–11, 31–32, lysine 38, lysine 53, 75–79, and asparagine 92; these read FI, DN, and EGACS. Tyrosine 139 serves as the catalytic Proton acceptor. Lysine 143 is an NADP(+) binding site. Residue asparagine 168 coordinates substrate. Valine 169 and lysine 177 together coordinate NADP(+). Lysine 177 serves as the catalytic Proton acceptor. Substrate contacts are provided by residues serine 179, histidine 186, 200–203, arginine 208, and tyrosine 271; that span reads FAGS.

Belongs to the NAD(P)-dependent epimerase/dehydratase family. HldD subfamily. Homopentamer. It depends on NADP(+) as a cofactor.

It carries out the reaction ADP-D-glycero-beta-D-manno-heptose = ADP-L-glycero-beta-D-manno-heptose. It participates in nucleotide-sugar biosynthesis; ADP-L-glycero-beta-D-manno-heptose biosynthesis; ADP-L-glycero-beta-D-manno-heptose from D-glycero-beta-D-manno-heptose 7-phosphate: step 4/4. It functions in the pathway bacterial outer membrane biogenesis; LOS core biosynthesis. In terms of biological role, catalyzes the interconversion between ADP-D-glycero-beta-D-manno-heptose and ADP-L-glycero-beta-D-manno-heptose via an epimerization at carbon 6 of the heptose. This Haemophilus influenzae (strain ATCC 51907 / DSM 11121 / KW20 / Rd) protein is ADP-L-glycero-D-manno-heptose-6-epimerase.